The primary structure comprises 1860 residues: Collagen alpha-1(XXVII) chain (1860 aa).

The N-terminal stretch at 1 to 41 is a signal peptide; it reads MGAGSARGARGTAAAAAARGGGFLFSWILVSFACHLASTQG. Residues 42 to 624 constitute a propeptide, N-terminal propeptide; sequence APEDVDILQR…AGSTPFPLLM (583 aa). The Laminin G-like domain occupies 71–236; sequence QSGFIFTQRA…NYCTHLRKQC (166 aa). Asn271 carries an N-linked (GlcNAc...) asparagine glycan. 3 disordered regions span residues 278-608, 625-772, and 851-1625; these read ALGS…TSSG, GPPG…GSDG, and LKGD…IQLQ. Composition is skewed to polar residues over residues 298 to 309 and 386 to 409; these read TKPQRTSPTNPH and HPTQ…QVPP. The segment covering 432 to 445 has biased composition (pro residues); it reads MPRPPPPSTRPLPP. Composition is skewed to low complexity over residues 446–457 and 485–505; these read TTSSSKKPIPTL and TALS…RPPA. Positions 509–518 are enriched in polar residues; that stretch reads PPTSGTSTPR. 2 stretches are compositionally biased toward low complexity: residues 572-588 and 599-608; these read TTRP…QTTP and SSSPRPTSSG. 16 consecutive Collagen-like domains span residues 625–679, 688–747, 748–807, 808–867, 871–930, 931–990, 1003–1062, 1066–1125, 1126–1185, 1192–1251, 1258–1317, 1318–1378, 1382–1441, 1442–1501, 1502–1561, and 1562–1621; these read GPPG…GDPG, GAKG…PGPV, GDPG…DGNP, GELG…SGDP, GDKG…KGKP, GARG…PGPV, GEPG…RGAK, GPRG…PGTK, GLPG…IGQR, GDSG…QGEK, GAKG…KGIV, GPLG…RGKP, GQPG…EGIA, GPDG…PGQL, GPPG…QGPR, and GPPG…PGGP. The tract at residues 625 to 1618 is triple-helical region; sequence GPPGPKGDCG…RGRPGPPGPP (994 aa). Residues 654 to 669 are compositionally biased toward pro residues; sequence RGPPGPYGNPGLPGPP. Low complexity predominate over residues 714–734; the sequence is PGPAGHPGEQGQPGPEGSPGA. Low complexity-rich tracts occupy residues 911–924 and 932–944; these read FPGD…NGPE and ARGL…QLGP. Residues 1033–1042 are compositionally biased toward gly residues; that stretch reads GMPGGMGTPG. Pro residues predominate over residues 1043–1053; it reads EPGPQGPPGSR. Pro residues predominate over residues 1130-1142; the sequence is EPGPQGPQGPIGP. Composition is skewed to basic and acidic residues over residues 1202 to 1220 and 1241 to 1253; these read LKGD…EKGQ and PEGK…EKGR. 2 stretches are compositionally biased toward basic and acidic residues: residues 1326 to 1338 and 1350 to 1360; these read KGEK…DGKA and PVGDRGDRGEP. The segment covering 1449 to 1458 has biased composition (low complexity); sequence RDGQAGQQGE. Residues 1572 to 1587 show a composition bias toward low complexity; the sequence is IVGPLGILGPSGLPGP. Pro residues predominate over residues 1603-1620; sequence RGPPGPRGRPGPPGPPGG. Residues 1622-1860 constitute a propeptide, C-terminal propeptide; it reads IQLQQDDLGA…RLEVGPACFL (239 aa). The 201-residue stretch at 1660–1860 folds into the Fibrillar collagen NC1 domain; sequence GEIFKTLHYL…RLEVGPACFL (201 aa). 3 cysteine pairs are disulfide-bonded: Cys1690–Cys1722, Cys1731–Cys1858, and Cys1767–Cys1811. Ca(2+) contacts are provided by Asp1708, Asn1710, Cys1713, and Asp1716. A glycan (N-linked (GlcNAc...) asparagine) is linked at Asn1769.

It belongs to the fibrillar collagen family.

Its subcellular location is the secreted. The protein localises to the extracellular space. It is found in the extracellular matrix. In terms of biological role, plays a role during the calcification of cartilage and the transition of cartilage to bone. The sequence is that of Collagen alpha-1(XXVII) chain (COL27A1) from Homo sapiens (Human).